Here is a 119-residue protein sequence, read N- to C-terminus: Large ribosomal subunit protein uL24 (119 aa).

The protein belongs to the universal ribosomal protein uL24 family. In terms of assembly, part of the 50S ribosomal subunit.

In terms of biological role, one of two assembly initiator proteins, it binds directly to the 5'-end of the 23S rRNA, where it nucleates assembly of the 50S subunit. Its function is as follows. One of the proteins that surrounds the polypeptide exit tunnel on the outside of the subunit. This chain is Large ribosomal subunit protein uL24, found in Paenarthrobacter aurescens (strain TC1).